We begin with the raw amino-acid sequence, 519 residues long: Anthranilate synthase component 1 (519 aa).

Residues Ser-39 and 290–292 each bind L-tryptophan; that span reads PYM. Chorismate is bound at residue 327–328; sequence GT. Glu-360 serves as a coordination point for Mg(2+). Chorismate contacts are provided by residues Tyr-448, Arg-468, 482 to 484, and Gly-484; that span reads GAG. Glu-497 is a binding site for Mg(2+).

This sequence belongs to the anthranilate synthase component I family. In terms of assembly, heterotetramer consisting of two non-identical subunits: a beta subunit (TrpG) and a large alpha subunit (TrpE). Mg(2+) is required as a cofactor.

It carries out the reaction chorismate + L-glutamine = anthranilate + pyruvate + L-glutamate + H(+). The protein operates within amino-acid biosynthesis; L-tryptophan biosynthesis; L-tryptophan from chorismate: step 1/5. Its activity is regulated as follows. Feedback inhibited by tryptophan. Part of a heterotetrameric complex that catalyzes the two-step biosynthesis of anthranilate, an intermediate in the biosynthesis of L-tryptophan. In the first step, the glutamine-binding beta subunit (TrpG) of anthranilate synthase (AS) provides the glutamine amidotransferase activity which generates ammonia as a substrate that, along with chorismate, is used in the second step, catalyzed by the large alpha subunit of AS (TrpE) to produce anthranilate. In the absence of TrpG, TrpE can synthesize anthranilate directly from chorismate and high concentrations of ammonia. The polypeptide is Anthranilate synthase component 1 (trpE) (Serratia marcescens).